Consider the following 220-residue polypeptide: Small ribosomal subunit protein eS1 (220 aa).

This sequence belongs to the eukaryotic ribosomal protein eS1 family.

The polypeptide is Small ribosomal subunit protein eS1 (Methanococcus vannielii (strain ATCC 35089 / DSM 1224 / JCM 13029 / OCM 148 / SB)).